Reading from the N-terminus, the 65-residue chain is TDIRTGLTDEECQEIHEMNMLGMHAYWSIGLIANALAYAWRPFHQGRAGNRLEDHAPDYVRSALT.

The Cytoplasmic segment spans residues 1-17; sequence TDIRTGLTDEECQEIHE. A bacteriochlorophyll is bound by residues histidine 16 and asparagine 34. Residues 18–40 form a helical membrane-spanning segment; sequence MNMLGMHAYWSIGLIANALAYAW. Residues 41 to 65 are Periplasmic-facing; sequence RPFHQGRAGNRLEDHAPDYVRSALT.

Belongs to the antenna complex beta subunit family. As to quaternary structure, the core complex is formed by different alpha and beta chains, binding bacteriochlorophyll molecules, and arranged most probably in tetrameric structures disposed around the reaction center. The non-pigmented gamma chains may constitute additional components.

Its subcellular location is the cell inner membrane. Its function is as follows. Antenna complexes are light-harvesting systems, which transfer the excitation energy to the reaction centers. This is Light-harvesting protein B800/830/1020 beta-2 chain from Halorhodospira halochloris (Ectothiorhodospira halochloris).